A 104-amino-acid polypeptide reads, in one-letter code: Phosphoribosyl-ATP pyrophosphatase (104 aa).

The protein belongs to the PRA-PH family.

It localises to the cytoplasm. It carries out the reaction 1-(5-phospho-beta-D-ribosyl)-ATP + H2O = 1-(5-phospho-beta-D-ribosyl)-5'-AMP + diphosphate + H(+). The protein operates within amino-acid biosynthesis; L-histidine biosynthesis; L-histidine from 5-phospho-alpha-D-ribose 1-diphosphate: step 2/9. The protein is Phosphoribosyl-ATP pyrophosphatase of Streptococcus thermophilus (strain ATCC BAA-491 / LMD-9).